Here is a 730-residue protein sequence, read N- to C-terminus: Probable palmitoyltransferase AKR2 (730 aa).

6 ANK repeats span residues 32 to 62 (FVVE…DINK), 66 to 95 (DELP…NVNQ), 100 to 129 (ERAT…NPTL), 133 to 166 (QGLN…NVDI), 172 to 201 (NNRT…TVAL), and 205 to 234 (RGFN…NFYE). The next 4 membrane-spanning stretches (helical) occupy residues 283 to 303 (LMIF…SLIL), 309 to 328 (IALS…KFVL), 344 to 364 (TPFF…IWVK), and 376 to 396 (AKDA…LKLV). In terms of domain architecture, DHHC spans 429–479 (NFCVETLERKPLRSKYSLFSGALVARFNHYCPWVYNDIGLKNHKLFMFFAF). The active-site S-palmitoyl cysteine intermediate is the C459. 2 helical membrane passes run 473-493 (LFMF…WLCL) and 530-550 (TFFL…MLIV).

This sequence belongs to the DHHC palmitoyltransferase family. AKR/ZDHHC17 subfamily.

The protein resides in the membrane. It catalyses the reaction L-cysteinyl-[protein] + hexadecanoyl-CoA = S-hexadecanoyl-L-cysteinyl-[protein] + CoA. The chain is Probable palmitoyltransferase AKR2 (AKR2) from Saccharomyces uvarum (strain ATCC 76518 / CBS 7001 / CLIB 283 / NBRC 10550 / MCYC 623 / NCYC 2669 / NRRL Y-11845) (Yeast).